We begin with the raw amino-acid sequence, 276 residues long: Adenylate kinase (276 aa).

38–43 (GSGKGT) contacts ATP. The tract at residues 58-87 (STGDMLRAAIEQGTETGKQAKTIMDQGGLV) is NMP. AMP is bound by residues T59, R64, 85-87 (GLV), 113-116 (GFPR), and Q120. The interval 154-191 (GRLVHPSSGRSYHREFFPPKVDMIDDITGEPLIQRSDD) is LID. ATP-binding positions include R155 and 164-165 (SY). AMP-binding residues include R188 and R199. Residue K227 coordinates ATP.

This sequence belongs to the adenylate kinase family. AK2 subfamily. Monomer.

The protein localises to the cytoplasm. The protein resides in the cytosol. It is found in the mitochondrion intermembrane space. It catalyses the reaction AMP + ATP = 2 ADP. Catalyzes the reversible transfer of the terminal phosphate group between ATP and AMP. Plays an important role in cellular energy homeostasis and in adenine nucleotide metabolism. Adenylate kinase activity is critical for regulation of the phosphate utilization and the AMP de novo biosynthesis pathways. In Dictyostelium discoideum (Social amoeba), this protein is Adenylate kinase (adkA).